The primary structure comprises 479 residues: EKNVGQITQIIGPVLDVAFSPGKMPNIYNSLLIKGQNPAGQEINVTCEVQQLLGNNEVRAVAMSATDGLMRGMNVVDTGAPLSVPVGEITLGXIFNVLGDPVDNLGPVDTSTTFPIHRSAPAFTQLDTKLSIFETGIKVVDLLAPYRRGGKIGLFGGAGVGKTVLIMELINNIAKAHGGVSVFGGVGERTREGNDLYMEMKESKVINEQNISESKVALVYGQMNEPPGARMRVGLTALTMAEYFRDVNKQDVLLFIDNIFRFVQAGSEVSALLGRMPSAVGYQPTLGTEMGTLQERITSTKEGSITSIQAVYVPADDLTDPAPATTFAHLDATTVLSRGLAAKGIYPAVDPLDSTSTMLQPWIVGEEHYETAQGVKQTLQRYKELQDIIAILGLDELSEEDRLTVARARKIERFLSQPFFVAEVFTGSPGKYVSLIETIKGFQMILSGELDNLPEQAFYLVGNIDEATTKAVSLQVEGQ.

Position 156 to 163 (156 to 163) interacts with ATP; the sequence is GGAGVGKT.

The protein belongs to the ATPase alpha/beta chains family. F-type ATPases have 2 components, CF(1) - the catalytic core - and CF(0) - the membrane proton channel. CF(1) has five subunits: alpha(3), beta(3), gamma(1), delta(1), epsilon(1). CF(0) has four main subunits: a(1), b(1), b'(1) and c(9-12).

The protein localises to the plastid. Its subcellular location is the chloroplast thylakoid membrane. It carries out the reaction ATP + H2O + 4 H(+)(in) = ADP + phosphate + 5 H(+)(out). Its function is as follows. Produces ATP from ADP in the presence of a proton gradient across the membrane. The catalytic sites are hosted primarily by the beta subunits. The sequence is that of ATP synthase subunit beta, chloroplastic from Trichomanes davallioides (Kilau fern).